We begin with the raw amino-acid sequence, 106 residues long: Small ribosomal subunit protein uS10 (106 aa).

Belongs to the universal ribosomal protein uS10 family. As to quaternary structure, part of the 30S ribosomal subunit.

Involved in the binding of tRNA to the ribosomes. The sequence is that of Small ribosomal subunit protein uS10 from Synechococcus sp. (strain CC9605).